The following is a 451-amino-acid chain: Prenyltransferase asqH1 (451 aa).

The disordered stretch occupies residues 14–37 (AEDQSTRKVHWGQEGSGQSPEARP). E120 lines the L-tryptophan pocket. Residues R137, R274, K276, Y278, and Y373 each coordinate substrate.

Belongs to the tryptophan dimethylallyltransferase family.

The catalysed reaction is quinolinone B + dimethylallyl diphosphate = peniprequinolone + diphosphate. It participates in secondary metabolite biosynthesis. The protein operates within alkaloid biosynthesis. Its pathway is mycotoxin biosynthesis. Functionally, prenyltransferase; part of the gene cluster that mediates the biosynthesis of the aspoquinolone mycotoxins. Within the pathway, the prenyltransferase asqH1 catalyzes the canonical Friedel-Crafts alkylation of quinolinone B with dimethylallyl cation to yield dimethylallyl quinolone. The first step of the pathway is catalyzed by the nonribosomal peptide synthetase asqK that condenses anthranilic acid and O-methyl-L-tyrosine to produce 4'-methoxycyclopeptin. 4'-methoxycyclopeptin is then converted to 4'-methoxydehydrocyclopeptin by the ketoglutarate-dependent dioxygenase asqJ. AsqJ also converts its first product 4'-methoxydehydrocyclopeptin to 4'-methoxycyclopenin. The following conversion of 4'-methoxycyclopenin into 4'-methoxyviridicatin is catalyzed by the cyclopenase asqI. 4'-methoxyviridicatin is the precursor of quinolone natural products, and is further converted to quinolinone B. The prenyltransferase asqH1 then catalyzes the canonical Friedel-Crafts alkylation of quinolinone B with dimethylallyl cation to yield dimethylallyl quinolone, which is subjected to FAD-dependent dehydrogenation by the FAD-linked oxidoreductase asqF to yield conjugated aryl diene. The delta(3') double bond then serves as the site of the second alkylation with DMAPP catalyzed by the prenyltransferase asqH2 to yield a carbenium ion intermediate, which can be attacked by H(2)O to yield a styrenyl quinolone containing a C3'-hydroxyprenyl chain. The FAD-dependent monooxygenase asqG performs epoxidation of the terminal C7'-C8' olefin. Finally, after dehydratation of the epoxide at C3 by asqC, the quinolone epoxide rearrangement protein asqO catalyzes an enzymatic 3-exo-tet cyclization to yield the cyclopropyl-THF ring system in aspoquinolone. The protein is Prenyltransferase asqH1 of Emericella nidulans (strain FGSC A4 / ATCC 38163 / CBS 112.46 / NRRL 194 / M139) (Aspergillus nidulans).